Consider the following 256-residue polypeptide: Ubiquinone/menaquinone biosynthesis C-methyltransferase UbiE (256 aa).

S-adenosyl-L-methionine contacts are provided by residues Thr79, Asp100, and 128–129 (DA).

It belongs to the class I-like SAM-binding methyltransferase superfamily. MenG/UbiE family.

It catalyses the reaction a 2-demethylmenaquinol + S-adenosyl-L-methionine = a menaquinol + S-adenosyl-L-homocysteine + H(+). The enzyme catalyses a 2-methoxy-6-(all-trans-polyprenyl)benzene-1,4-diol + S-adenosyl-L-methionine = a 5-methoxy-2-methyl-3-(all-trans-polyprenyl)benzene-1,4-diol + S-adenosyl-L-homocysteine + H(+). The protein operates within quinol/quinone metabolism; menaquinone biosynthesis; menaquinol from 1,4-dihydroxy-2-naphthoate: step 2/2. It functions in the pathway cofactor biosynthesis; ubiquinone biosynthesis. Its function is as follows. Methyltransferase required for the conversion of demethylmenaquinol (DMKH2) to menaquinol (MKH2) and the conversion of 2-polyprenyl-6-methoxy-1,4-benzoquinol (DDMQH2) to 2-polyprenyl-3-methyl-6-methoxy-1,4-benzoquinol (DMQH2). This is Ubiquinone/menaquinone biosynthesis C-methyltransferase UbiE from Pseudomonas fluorescens (strain SBW25).